We begin with the raw amino-acid sequence, 569 residues long: Urease subunit alpha (569 aa).

Positions 131 to 569 (GSIDTHIHFI…VPMAQRYFLL (439 aa)) constitute a Urease domain. 3 residues coordinate Ni(2+): His-136, His-138, and Lys-219. Lys-219 carries the N6-carboxylysine modification. His-221 contacts substrate. His-248 and His-274 together coordinate Ni(2+). The active-site Proton donor is His-322. Asp-362 is a binding site for Ni(2+).

Belongs to the metallo-dependent hydrolases superfamily. Urease alpha subunit family. In terms of assembly, heterotrimer of UreA (gamma), UreB (beta) and UreC (alpha) subunits. Three heterotrimers associate to form the active enzyme. Ni cation is required as a cofactor. Post-translationally, carboxylation allows a single lysine to coordinate two nickel ions.

The protein localises to the cytoplasm. It catalyses the reaction urea + 2 H2O + H(+) = hydrogencarbonate + 2 NH4(+). It functions in the pathway nitrogen metabolism; urea degradation; CO(2) and NH(3) from urea (urease route): step 1/1. The polypeptide is Urease subunit alpha (Prochlorococcus marinus (strain AS9601)).